A 1371-amino-acid chain; its full sequence is Serine protease pic autotransporter (1371 aa).

The N-terminal stretch at 1 to 55 (MNKVYSLKYCPVTGGLIVVSELASRVIKKTCRRLTHILLAGIPAVYLYYPQISQA) is a signal peptide. The Peptidase S6 domain maps to 56 to 301 (GIVRSDIAYQ…NVIPTDYLNQ (246 aa)). Active-site charge relay system residues include His127, Asp155, and Ser258. In terms of domain architecture, Autotransporter spans 1105–1371 (DTNGDAGAWA…AVNANFRYMF (267 aa)).

Post-translationally, cleaved to release the mature protein from the outer membrane.

Its subcellular location is the periplasm. The protein resides in the secreted. It is found in the cell surface. The protein localises to the cell outer membrane. In terms of biological role, involved in virulence of uropathogenic E.coli although it is not known how it contributes to it. Has no mucinase activity. The chain is Serine protease pic autotransporter (pic) from Escherichia coli O6:H1 (strain CFT073 / ATCC 700928 / UPEC).